We begin with the raw amino-acid sequence, 168 residues long: Crossover junction endodeoxyribonuclease RuvC (168 aa).

Active-site residues include Asp-7, Glu-67, and His-139. 3 residues coordinate Mg(2+): Asp-7, Glu-67, and His-139.

It belongs to the RuvC family. Homodimer which binds Holliday junction (HJ) DNA. The HJ becomes 2-fold symmetrical on binding to RuvC with unstacked arms; it has a different conformation from HJ DNA in complex with RuvA. In the full resolvosome a probable DNA-RuvA(4)-RuvB(12)-RuvC(2) complex forms which resolves the HJ. It depends on Mg(2+) as a cofactor.

The protein resides in the cytoplasm. It carries out the reaction Endonucleolytic cleavage at a junction such as a reciprocal single-stranded crossover between two homologous DNA duplexes (Holliday junction).. Functionally, the RuvA-RuvB-RuvC complex processes Holliday junction (HJ) DNA during genetic recombination and DNA repair. Endonuclease that resolves HJ intermediates. Cleaves cruciform DNA by making single-stranded nicks across the HJ at symmetrical positions within the homologous arms, yielding a 5'-phosphate and a 3'-hydroxyl group; requires a central core of homology in the junction. The consensus cleavage sequence is 5'-(A/T)TT(C/G)-3'. Cleavage occurs on the 3'-side of the TT dinucleotide at the point of strand exchange. HJ branch migration catalyzed by RuvA-RuvB allows RuvC to scan DNA until it finds its consensus sequence, where it cleaves and resolves the cruciform DNA. In Deinococcus geothermalis (strain DSM 11300 / CIP 105573 / AG-3a), this protein is Crossover junction endodeoxyribonuclease RuvC.